We begin with the raw amino-acid sequence, 111 residues long: UPF0060 membrane protein XAC3064 (111 aa).

Helical transmembrane passes span 8–28 (LLLF…PYLW), 32–52 (GGSV…VWLL), 64–84 (AAYG…VDGV), and 91–111 (LLGA…PRSA).

It belongs to the UPF0060 family.

It is found in the cell inner membrane. This chain is UPF0060 membrane protein XAC3064, found in Xanthomonas axonopodis pv. citri (strain 306).